A 296-amino-acid chain; its full sequence is Probable endonuclease 4 (296 aa).

Histidine 68, histidine 108, glutamate 145, aspartate 179, histidine 182, histidine 216, aspartate 229, histidine 231, and glutamate 261 together coordinate Zn(2+).

This sequence belongs to the AP endonuclease 2 family. The cofactor is Zn(2+).

It catalyses the reaction Endonucleolytic cleavage to 5'-phosphooligonucleotide end-products.. Endonuclease IV plays a role in DNA repair. It cleaves phosphodiester bonds at apurinic or apyrimidinic (AP) sites, generating a 3'-hydroxyl group and a 5'-terminal sugar phosphate. The protein is Probable endonuclease 4 of Geobacter sulfurreducens (strain ATCC 51573 / DSM 12127 / PCA).